The primary structure comprises 446 residues: Glutamine synthetase (446 aa).

The GS beta-grasp domain maps to 15 to 102 (RDIRFVRLWF…MFCDITMPDG (88 aa)). Residues 109-446 (PRHVLRRQLT…PYELRTYLSL (338 aa)) enclose the GS catalytic domain. Mg(2+) contacts are provided by Glu-132 and Glu-134. Glu-184 serves as a coordination point for ATP. Mg(2+)-binding residues include Glu-189 and Glu-196. Residue Gly-241 participates in L-glutamate binding. His-245 serves as a coordination point for Mg(2+). Residues 247–249 (HMS) and Ser-249 each bind ATP. 3 residues coordinate L-glutamate: Arg-298, Glu-304, and Arg-316. ATP is bound by residues Arg-316 and Arg-321. Glu-336 contacts Mg(2+). Residue Arg-338 participates in L-glutamate binding.

This sequence belongs to the glutamine synthetase family. Oligomer of 12 subunits arranged in the form of two hexagons. In its feedback-inhibited form, interacts with TnrA in order to block its DNA-binding activity. Requires Mg(2+) as cofactor.

The protein resides in the cytoplasm. It carries out the reaction L-glutamate + NH4(+) + ATP = L-glutamine + ADP + phosphate + H(+). Its activity is regulated as follows. Inhibited by glutamine. Functionally, glutamine synthetase (GS) is an unusual multitasking protein that functions as an enzyme, a transcription coregulator, and a chaperone in ammonium assimilation and in the regulation of genes involved in nitrogen metabolism. It catalyzes the ATP-dependent biosynthesis of glutamine from glutamate and ammonia. Feedback-inhibited GlnA also interacts with and regulates the activity of the transcriptional regulator TnrA. During nitrogen limitation, TnrA is in its DNA-binding active state and turns on the transcription of genes required for nitrogen assimilation. Under conditions of nitrogen excess, feedback-inhibited GlnA forms a stable complex with TnrA, which inhibits its DNA-binding activity. In contrast, feedback-inhibited GlnA acts as a chaperone to stabilize the DNA-binding activity of GlnR, which represses the transcription of nitrogen assimilation genes. This is Glutamine synthetase from Mycobacterium bovis (strain ATCC BAA-935 / AF2122/97).